Here is a 1121-residue protein sequence, read N- to C-terminus: Anillin (1121 aa).

Methionine 1 carries the N-acetylmethionine modification. Residues 1–25 (MDPFTEKLLERTRARRENLQRKMAE) are compositionally biased toward basic and acidic residues. The required for ubiquitination stretch occupies residues 1–45 (MDPFTEKLLERTRARRENLQRKMAERPTAVARSAPHAKRGREPLS). 3 disordered regions span residues 1 to 113 (MDPF…AAIS), 125 to 196 (ADRG…PVGR), and 212 to 402 (DDVS…TKAI). The interval 1-154 (MDPFTEKLLE…MQRLAEQRRH (154 aa)) is interaction with CD2AP. A nuclear localization region spans residues 1–228 (MDPFTEKLLE…AKQNSVQEQP (228 aa)). Residues serine 73 and serine 96 each carry the phosphoserine modification. Residues 96–109 (SPMPAPRQAKPPAP) show a composition bias toward pro residues. Over residues 130–143 (NSGSEASATSSVKT) the composition is skewed to polar residues. Residues 147 to 157 (RLAEQRRHWDS) show a composition bias toward basic and acidic residues. Serine 180 is modified (phosphoserine). At threonine 192 the chain carries Phosphothreonine. A compositionally biased stretch (polar residues) spans 216–228 (HSSAKQNSVQEQP). Residues serine 223, serine 250, and serine 259 each carry the phosphoserine modification. Positions 229 to 671 (GTACLSKSSS…RDLLYSIDAY (443 aa)) are interaction with F-actin. Residues 234 to 250 (SKSSSASGASASINSSS) are compositionally biased toward low complexity. Residues 282-298 (SASVSSSVKASSPVTAA) are compositionally biased toward low complexity. The span at 303-314 (ENREAQNPELLH) shows a compositional bias: basic and acidic residues. Threonine 316 carries the phosphothreonine modification. Serine 318 and serine 334 each carry phosphoserine. The residue at position 359 (threonine 359) is a Phosphothreonine. At lysine 366 the chain carries N6-acetyllysine. The segment covering 368–384 (FLERFGERCQEHSKESP) has biased composition (basic and acidic residues). Polar residues predominate over residues 391 to 401 (KTPNITPNTKA). Threonine 392 and threonine 396 each carry phosphothreonine. Residues serine 414 and serine 444 each carry the phosphoserine modification. Residues 490–511 (NEPAVKLSSTEPAGSTESEMTK) form a disordered region. Over residues 496 to 511 (LSSTEPAGSTESEMTK) the composition is skewed to polar residues. Phosphoserine occurs at positions 513, 548, and 556. Residues 564 to 599 (FSDVLEEGELDVEKSQEEMDQVGAENSEEQEDALNI) adopt a coiled-coil conformation. Residues 623 to 635 (SPPSELRDSNLSA) are compositionally biased toward polar residues. Positions 623–656 (SPPSELRDSNLSAASPKPGKFQRTRVPRAESADS) are disordered. Serine 637, serine 653, serine 656, and serine 659 each carry phosphoserine. Tyrosine 666 carries the phosphotyrosine modification. A phosphoserine mark is found at serine 673, serine 683, serine 787, and serine 924. The interval 725 to 1121 (QQTVIYQASQ…DACYKPVGKP (397 aa)) is localization to the cleavage furrow. A PH domain is found at 980 to 1104 (AVEEKGFLTI…WMQKLNQVIV (125 aa)).

In terms of assembly, interacts with F-actin. Interacts with CD2AP. May interact with RHOA. Interacts with FZR1/CDH1 during mitotic exit. Phosphorylated during mitosis. Post-translationally, ubiquitinated, and this requires FZR1/CDH1.

It is found in the nucleus. It localises to the cytoplasm. The protein resides in the cytoskeleton. The protein localises to the cell cortex. Its subcellular location is the cell projection. It is found in the bleb. In terms of biological role, required for cytokinesis. Essential for the structural integrity of the cleavage furrow and for completion of cleavage furrow ingression. Plays a role in bleb assembly during metaphase and anaphase of mitosis. May play a significant role in podocyte cell migration. This is Anillin (Anln) from Mus musculus (Mouse).